Here is a 2877-residue protein sequence, read N- to C-terminus: Desmoplakin (2877 aa).

A disordered region spans residues 1-20 (MSCNGGSHPRINTLGRMTRA). The interval 1-591 (MSCNGGSHPR…DYMKTIEDLE (591 aa)) is interaction with PKP1, JUP, PKP2. The tract at residues 1-1063 (MSCNGGSHPR…ANSENCNKNK (1063 aa)) is globular 1. Ser-22 and Ser-62 each carry phosphoserine. Tyr-65 carries the phosphotyrosine modification. The residue at position 70 (Thr-70) is a Phosphothreonine. A phosphoserine mark is found at Ser-174, Ser-175, and Ser-183. Spectrin repeat units follow at residues 185–278 (SGWD…HLRQ) and 279–382 (LQNI…LKEN). One copy of the Spectrin 3a repeat lies at 383 to 453 (AAYFQFFEEA…NLVNKSKKIV (71 aa)). In terms of domain architecture, SH3 spans 465–522 (NKPIILRALCDYKQDQKIVHKGDECILKDNNERSKWYVTGPGGVDMLVPSVGLIIPPP). Residues 523–552 (NPLAVDLSCKIEQYYEAILALWNQLYINMK) form a Spectrin 3b repeat. Spectrin repeat units lie at residues 553–634 (SLVS…IQLP), 661–776 (VIET…SLCS), and 777–890 (VRAL…DLEK). Coiled coils occupy residues 1034-1280 (LKLK…AEEN), 1313-1354 (NARH…YENE), 1395-1443 (TSGY…QKAS), and 1473-1926 (KQSL…KLED). A central fibrous rod domain region spans residues 1064-1952 (FLDQNLQKYQ…QKEIDKLRQR (889 aa)). 3 positions are modified to phosphoserine: Ser-1665, Ser-1715, and Ser-2031. Residues 1953–2877 (PYGSHRETQT…YSFSSSSIGY (925 aa)) form a globular 2 region. The interval 1967–2215 (TVDSSKLVFD…LLLSVQKRSM (249 aa)) is 4.5 X 38 AA tandem repeats (Domain A). 17 Plectin repeats span residues 2016–2052 (QPFL…PEST), 2053–2090 (VMLL…FDDR), 2091–2128 (QQIY…RETG), 2129–2166 (MRLL…RDLY), 2170–2204 (NDPR…PHTG), 2205–2240 (LLLL…PSTV), 2258–2295 (KDFL…PGTA), 2296–2333 (LELL…IEFK), 2334–2371 (EKLL…KGHG), 2372–2409 (IRLL…EELS), 2413–2447 (SDPS…EETG), 2463–2500 (SQKN…YETF), 2514–2551 (TITG…RKFF), 2617–2654 (SDPL…SITG), 2655–2692 (QRLL…QDMA), 2731–2768 (QRFL…GRAA), and 2769–2806 (QRLQ…DITG). A phosphoserine mark is found at Ser-2214, Ser-2216, and Ser-2232. Residues 2251 to 2453 (DEVGERIKDF…EETGLCLLPL (203 aa)) are 4.5 X 38 AA tandem repeats (Domain B). The stretch at 2603–2628 (ISSVRNLTIRSSSLSDPLEESSPIAA) is one LRR 15 repeat. A 4.5 X 38 AA tandem repeats (Domain C) region spans residues 2616-2828 (LSDPLEESSP…GLPSPYNMSA (213 aa)). 2 positions are modified to phosphoserine: Ser-2817 and Ser-2822. Residues 2817–2877 (SKGLPSPYNM…YSFSSSSIGY (61 aa)) form a disordered region. A Phosphotyrosine modification is found at Tyr-2824. Phosphoserine occurs at positions 2827 and 2831. Residues 2830–2853 (GSRSGSRSGSRSGSRSGSRSGSRR) form a 6 X 4 AA tandem repeats of G-S-R-[SR] region. Over residues 2830-2853 (GSRSGSRSGSRSGSRSGSRSGSRR) the composition is skewed to low complexity. Residues Arg-2832 and Arg-2853 each carry the omega-N-methylarginine modification. Ser-2855 is modified (phosphoserine). Residue Thr-2859 is modified to Phosphothreonine. Over residues 2862-2877 (SSYSYSYSFSSSSIGY) the composition is skewed to low complexity. The residue at position 2874 (Ser-2874) is a Phosphoserine.

The protein belongs to the plakin or cytolinker family. In terms of assembly, homodimer. Interacts with COL17A1 (via cytoplasmic region). Interacts with DSC2. Interacts with PKP1. Interacts with PKP2. Interacts weakly with TMEM65. Phosphorylation at Ser-2855 increases association with intermediate filament cytokeratin, potentially facilitating interaction between desmosome junctions and intermediate filament architecture. Expressed in cardiomyocytes (at protein level).

The protein resides in the cell junction. The protein localises to the desmosome. It localises to the cell membrane. It is found in the cytoplasm. Functionally, major high molecular weight protein of desmosomes. Regulates profibrotic gene expression in cardiomyocytes via activation of the MAPK14/p38 MAPK signaling cascade and increase in TGFB1 protein abundance. The protein is Desmoplakin of Rattus norvegicus (Rat).